Here is a 296-residue protein sequence, read N- to C-terminus: Nucleotide-binding protein SEQ_0857 (296 aa).

Position 13-20 (13-20 (GMSGAGKT)) interacts with ATP. 63–66 (DMRS) serves as a coordination point for GTP.

It belongs to the RapZ-like family.

Functionally, displays ATPase and GTPase activities. The polypeptide is Nucleotide-binding protein SEQ_0857 (Streptococcus equi subsp. equi (strain 4047)).